A 1495-amino-acid chain; its full sequence is Collagen alpha-1(XVII) chain (1495 aa).

Residues Met1 to Glu17 show a composition bias toward basic and acidic residues. Positions Met1–Gly138 are disordered. The Cytoplasmic portion of the chain corresponds to Met1 to Trp435. The tract at residues Met1 to Arg535 is nonhelical region (NC16). Residues Gln19–Thr32 are compositionally biased toward polar residues. The segment covering Ser51–Gly63 has biased composition (low complexity). 2 stretches are compositionally biased toward polar residues: residues Tyr64–Ser80 and Glu95–Pro104. The helical; Signal-anchor for type II membrane protein transmembrane segment at Leu436 to Leu456 threads the bilayer. Over Ala457–Val1495 the chain is Extracellular. Disordered stretches follow at residues Arg532–Ser824, Asp847–Gln999, Glu1160–Ile1185, Ser1201–Leu1226, Arg1251–Gly1278, Gly1295–Gly1336, and Met1396–Ser1416. Residues Gly536 to Gln1482 form a triple-helical region region. Low complexity-rich tracts occupy residues Pro702 to Ala711 and Arg761 to Lys773. The span at Pro786 to Val807 shows a compositional bias: pro residues. Residues Pro809–Pro818 are compositionally biased toward low complexity. Composition is skewed to pro residues over residues Pro871–Arg886, Pro901–Pro910, Pro946–Pro955, Pro981–Pro993, Pro1167–Ile1179, Pro1208–Pro1218, and Pro1257–Pro1269. Positions Gly1296–Leu1308 are enriched in gly residues. The span at Gly1309 to Gly1336 shows a compositional bias: low complexity. Residues Pro1403–Pro1413 are compositionally biased toward pro residues. The N-linked (GlcNAc...) asparagine glycan is linked to Asn1424. The interval Thr1435–Val1495 is disordered. Residues Pro1472–Glu1481 are compositionally biased toward basic and acidic residues. Residues Met1483–Val1495 are nonhelical region (NC1). Over residues Gly1486–Val1495 the composition is skewed to basic residues.

In terms of assembly, homotrimers of alpha 1(XVII)chains. The intracellular/endo domain is disulfide-linked. In terms of processing, prolines at the third position of the tripeptide repeating unit (G-X-Y) are hydroxylated in some or all of the chains. Post-translationally, the ectodomain is shedded from the surface of keratinocytes resulting in a 120-kDa soluble form, also named as 120 kDa linear IgA disease antigen homolog. The shedding is mediated by membrane-bound metalloproteases. In terms of tissue distribution, cornea specific.

The protein resides in the cell junction. The protein localises to the hemidesmosome. It is found in the membrane. It localises to the secreted. Its subcellular location is the extracellular space. The protein resides in the extracellular matrix. The protein localises to the basement membrane. May play a role in the integrity of hemidesmosome and the attachment of basal keratinocytes to the underlying basement membrane. In terms of biological role, the 120 kDa linear IgA disease antigen homolog is an anchoring filament component involved in dermal-epidermal cohesion. This is Collagen alpha-1(XVII) chain (COL17A1) from Gallus gallus (Chicken).